The primary structure comprises 74 residues: ATP synthase subunit c (74 aa).

Helical transmembrane passes span 8–28 (FIGIGFMAIGMYGAALGVSNI) and 52–72 (IGAGLAEAMGLFAFVIAMLLI).

Belongs to the ATPase C chain family. In terms of assembly, F-type ATPases have 2 components, F(1) - the catalytic core - and F(0) - the membrane proton channel. F(1) has five subunits: alpha(3), beta(3), gamma(1), delta(1), epsilon(1). F(0) has three main subunits: a(1), b(2) and c(10-14). The alpha and beta chains form an alternating ring which encloses part of the gamma chain. F(1) is attached to F(0) by a central stalk formed by the gamma and epsilon chains, while a peripheral stalk is formed by the delta and b chains.

The protein localises to the cell inner membrane. Its function is as follows. F(1)F(0) ATP synthase produces ATP from ADP in the presence of a proton or sodium gradient. F-type ATPases consist of two structural domains, F(1) containing the extramembraneous catalytic core and F(0) containing the membrane proton channel, linked together by a central stalk and a peripheral stalk. During catalysis, ATP synthesis in the catalytic domain of F(1) is coupled via a rotary mechanism of the central stalk subunits to proton translocation. In terms of biological role, key component of the F(0) channel; it plays a direct role in translocation across the membrane. A homomeric c-ring of between 10-14 subunits forms the central stalk rotor element with the F(1) delta and epsilon subunits. The chain is ATP synthase subunit c from Rickettsia typhi (strain ATCC VR-144 / Wilmington).